Reading from the N-terminus, the 386-residue chain is Phosphate acyltransferase (386 aa).

A disordered region spans residues 359–386 (PHRARQDELGENKVVGADQSMTAKATGT). Over residues 377–386 (QSMTAKATGT) the composition is skewed to polar residues.

This sequence belongs to the PlsX family. In terms of assembly, homodimer. Probably interacts with PlsY.

It is found in the cytoplasm. It carries out the reaction a fatty acyl-[ACP] + phosphate = an acyl phosphate + holo-[ACP]. Its pathway is lipid metabolism; phospholipid metabolism. Functionally, catalyzes the reversible formation of acyl-phosphate (acyl-PO(4)) from acyl-[acyl-carrier-protein] (acyl-ACP). This enzyme utilizes acyl-ACP as fatty acyl donor, but not acyl-CoA. The sequence is that of Phosphate acyltransferase from Beijerinckia indica subsp. indica (strain ATCC 9039 / DSM 1715 / NCIMB 8712).